The following is a 584-amino-acid chain: Endogenous retrovirus group FC1 Env polyprotein (584 aa).

The N-terminal stretch at 1-22 (MARPSPLCLLLLLTLLPPIVPS) is a signal peptide. At 23-514 (NSLLTEPPFR…NYGGGWWQSP (492 aa)) the chain is on the extracellular side. N-linked (GlcNAc...) asparagine glycans are attached at residues N69 and N247. Residues 251 to 254 (CFLC) carry the CXXC motif. N-linked (GlcNAc...) asparagine glycosylation is found at N272, N276, N308, N313, N322, N334, N342, and N346. The fusion peptide stretch occupies residues 388–413 (PLVIGVSLTSSLVASGLGTGAIVHFI). The short motif at 449–465 (MQNRRALDLLTADKGGT) is the CKS-17 element. A disulfide bridge connects residues C466 and C473. Positions 466-474 (CMFLGEECC) match the CX6CC motif. N-linked (GlcNAc...) asparagine glycosylation occurs at N478. Residues 515–540 (LTTWIIPFISPILIICLLLLIAPCVL) form a helical membrane-spanning segment. The Cytoplasmic portion of the chain corresponds to 541–584 (KFIKNRISEVSRVTVNQMLLHPYSRLPTSEDHYDVALTQQEAAR).

It belongs to the gamma type-C retroviral envelope protein family. HERV class-I F(c)1 env subfamily. In terms of assembly, the surface (SU) and transmembrane (TM) proteins form a heterodimer. SU and TM are attached by noncovalent interactions or by a labile interchain disulfide bond. In terms of processing, specific enzymatic cleavages in vivo yield the mature SU and TM proteins. Post-translationally, the CXXC motif is highly conserved across a broad range of retroviral envelope proteins. It is thought to participate in the formation of a labile disulfide bond possibly with the CX6CC motif present in the transmembrane protein.

The protein resides in the virion. It localises to the cell membrane. In terms of biological role, retroviral envelope proteins mediate receptor recognition and membrane fusion during early infection. Endogenous envelope proteins may have kept, lost or modified their original function during evolution. This endogenous envelope protein has lost its original fusogenic properties. Its function is as follows. SU mediates receptor recognition. Functionally, TM anchors the envelope heterodimer to the viral membrane through one transmembrane domain. The other hydrophobic domain, called fusion peptide, mediates fusion of the viral membrane with the target cell membrane. This is Endogenous retrovirus group FC1 Env polyprotein (ERVFC1) from Pan troglodytes (Chimpanzee).